Reading from the N-terminus, the 71-residue chain is Small ribosomal subunit protein bS21 (71 aa).

The interval 37-71 is disordered; that stretch reads HYEKPTAERKRKKAAAVKRHMKKLSRDNARRVKLY. Positions 45-59 are enriched in basic residues; sequence RKRKKAAAVKRHMKK. Residues 60 to 71 are compositionally biased toward basic and acidic residues; that stretch reads LSRDNARRVKLY.

The protein belongs to the bacterial ribosomal protein bS21 family.

This Pseudoalteromonas translucida (strain TAC 125) protein is Small ribosomal subunit protein bS21.